The primary structure comprises 304 residues: UDP-N-acetylenolpyruvoylglucosamine reductase (304 aa).

One can recognise an FAD-binding PCMH-type domain in the interval 33 to 213; it reads IGGPADIMVI…LEITRDLTER (181 aa). R177 is a catalytic residue. S227 acts as the Proton donor in catalysis. Residue E297 is part of the active site.

The protein belongs to the MurB family. FAD is required as a cofactor.

The protein localises to the cytoplasm. It catalyses the reaction UDP-N-acetyl-alpha-D-muramate + NADP(+) = UDP-N-acetyl-3-O-(1-carboxyvinyl)-alpha-D-glucosamine + NADPH + H(+). It participates in cell wall biogenesis; peptidoglycan biosynthesis. Functionally, cell wall formation. This Alkaliphilus oremlandii (strain OhILAs) (Clostridium oremlandii (strain OhILAs)) protein is UDP-N-acetylenolpyruvoylglucosamine reductase.